The following is a 308-amino-acid chain: GTPase Era (308 aa).

One can recognise an Era-type G domain in the interval 7–181; the sequence is RCGWVALIGP…LRLIVGYMPE (175 aa). Residues 15–22 form a G1 region; the sequence is GPPNAGKS. 15 to 22 contributes to the GTP binding site; that stretch reads GPPNAGKS. The tract at residues 41 to 45 is G2; sequence QTTRN. The segment at 62–65 is G3; it reads DTPG. Residues 62-66 and 130-133 contribute to the GTP site; these read DTPGI and NKID. Residues 130–133 form a G4 region; that stretch reads NKID. The interval 160 to 162 is G5; sequence ASA. Residues 212–290 enclose the KH type-2 domain; the sequence is LRQELPYSTA…HLELWVKVRE (79 aa).

This sequence belongs to the TRAFAC class TrmE-Era-EngA-EngB-Septin-like GTPase superfamily. Era GTPase family. As to quaternary structure, monomer.

It localises to the cytoplasm. The protein resides in the cell inner membrane. Functionally, an essential GTPase that binds both GDP and GTP, with rapid nucleotide exchange. Plays a role in 16S rRNA processing and 30S ribosomal subunit biogenesis and possibly also in cell cycle regulation and energy metabolism. The protein is GTPase Era of Nitratidesulfovibrio vulgaris (strain DP4) (Desulfovibrio vulgaris).